Consider the following 62-residue polypeptide: Large ribosomal subunit protein uL29 (62 aa).

It belongs to the universal ribosomal protein uL29 family.

In Geobacter metallireducens (strain ATCC 53774 / DSM 7210 / GS-15), this protein is Large ribosomal subunit protein uL29.